A 69-amino-acid polypeptide reads, in one-letter code: Cytochrome b-c1 complex subunit 6 (69 aa).

2 disulfides stabilise this stretch: Cys-17–Cys-59 and Cys-31–Cys-45.

It belongs to the UQCRH/QCR6 family. As to quaternary structure, component of the ubiquinol-cytochrome c oxidoreductase (cytochrome b-c1 complex, complex III, CIII), a multisubunit enzyme composed of 3 respiratory subunits cytochrome b, cytochrome c1 and Rieske protein, 2 core protein subunits, and additional low-molecular weight protein subunits. The complex exists as an obligatory dimer and forms supercomplexes (SCs) in the inner mitochondrial membrane with cytochrome c oxidase (complex IV, CIV).

It is found in the mitochondrion inner membrane. Functionally, component of the ubiquinol-cytochrome c oxidoreductase, a multisubunit transmembrane complex that is part of the mitochondrial electron transport chain which drives oxidative phosphorylation. The respiratory chain contains 3 multisubunit complexes succinate dehydrogenase (complex II, CII), ubiquinol-cytochrome c oxidoreductase (cytochrome b-c1 complex, complex III, CIII) and cytochrome c oxidase (complex IV, CIV), that cooperate to transfer electrons derived from NADH and succinate to molecular oxygen, creating an electrochemical gradient over the inner membrane that drives transmembrane transport and the ATP synthase. The cytochrome b-c1 complex catalyzes electron transfer from ubiquinol to cytochrome c, linking this redox reaction to translocation of protons across the mitochondrial inner membrane, with protons being carried across the membrane as hydrogens on the quinol. In the process called Q cycle, 2 protons are consumed from the matrix, 4 protons are released into the intermembrane space and 2 electrons are passed to cytochrome c. This chain is Cytochrome b-c1 complex subunit 6, found in Solanum tuberosum (Potato).